A 131-amino-acid chain; its full sequence is Small ribosomal subunit protein uS8 (131 aa).

It belongs to the universal ribosomal protein uS8 family. As to quaternary structure, part of the 30S ribosomal subunit. Contacts proteins S5 and S12.

Its function is as follows. One of the primary rRNA binding proteins, it binds directly to 16S rRNA central domain where it helps coordinate assembly of the platform of the 30S subunit. The polypeptide is Small ribosomal subunit protein uS8 (Zymomonas mobilis subsp. mobilis (strain ATCC 31821 / ZM4 / CP4)).